The sequence spans 468 residues: Aldehyde dehydrogenase family 3 member B1 (468 aa).

Methionine 1 carries the post-translational modification N-acetylmethionine. 188-193 serves as a coordination point for NAD(+); that stretch reads GSPRVG. Catalysis depends on residues glutamate 210 and cysteine 244. The S-palmitoyl cysteine moiety is linked to residue cysteine 463. Cysteine 465 is subject to Cysteine methyl ester. Residue cysteine 465 is the site of S-geranylgeranyl cysteine attachment. Positions 466-468 are cleaved as a propeptide — removed in mature form; sequence TLL.

The protein belongs to the aldehyde dehydrogenase family. In terms of processing, dually lipidated in the C-terminus; prenylation occurs prior to, and is a prerequisite for palmitoylation. It is also required for activity towards long-chain substrates. In terms of tissue distribution, highest expression in kidney and lung.

The protein resides in the cell membrane. The enzyme catalyses an aldehyde + NADP(+) + H2O = a carboxylate + NADPH + 2 H(+). It carries out the reaction an aldehyde + NAD(+) + H2O = a carboxylate + NADH + 2 H(+). It catalyses the reaction a long-chain fatty aldehyde + NAD(+) + H2O = a long-chain fatty acid + NADH + 2 H(+). The catalysed reaction is a medium-chain fatty aldehyde + NAD(+) + H2O = a medium-chain fatty acid + NADH + 2 H(+). The enzyme catalyses octanal + NAD(+) + H2O = octanoate + NADH + 2 H(+). It carries out the reaction nonanal + NAD(+) + H2O = nonanoate + NADH + 2 H(+). It catalyses the reaction hexadecanoate + NADH + 2 H(+) = hexadecanal + NAD(+) + H2O. The catalysed reaction is (2E)-octenal + NAD(+) + H2O = (2E)-octenoate + NADH + 2 H(+). The enzyme catalyses (E)-non-2-enal + NAD(+) + H2O = (E)-non-2-enoate + NADH + 2 H(+). It carries out the reaction (E)-4-hydroxynon-2-enal + NAD(+) + H2O = (E)-4-hydroxynon-2-enoate + NADH + 2 H(+). It catalyses the reaction (2E)-hexadecenal + NAD(+) + H2O = (E)-hexadec-2-enoate + NADH + 2 H(+). The catalysed reaction is benzaldehyde + NAD(+) + H2O = benzoate + NADH + 2 H(+). The enzyme catalyses a medium-chain fatty aldehyde + NADP(+) + H2O = a medium-chain fatty acid + NADPH + 2 H(+). It carries out the reaction hexanal + NADP(+) + H2O = hexanoate + NADPH + 2 H(+). It catalyses the reaction octanal + NADP(+) + H2O = octanoate + NADPH + 2 H(+). The catalysed reaction is nonanal + NADP(+) + H2O = nonanoate + NADPH + 2 H(+). The enzyme catalyses (2E)-octenal + NADP(+) + H2O = (2E)-octenoate + NADPH + 2 H(+). It carries out the reaction (E)-non-2-enal + NADP(+) + H2O = (E)-non-2-enoate + NADPH + 2 H(+). It catalyses the reaction (E)-4-hydroxynon-2-enal + NADP(+) + H2O = (E)-4-hydroxynon-2-enoate + NADPH + 2 H(+). The catalysed reaction is benzaldehyde + NADP(+) + H2O = benzoate + NADPH + 2 H(+). It participates in alcohol metabolism; ethanol degradation; acetate from ethanol: step 2/2. Oxidizes medium and long chain saturated and unsaturated fatty aldehydes generated in the plasma membrane into non-toxic fatty acids. May have a protective role against the cytotoxicity induced by lipid peroxidation. Short-chain fatty aldehydes are not good substrates. Can use both NADP(+) and NAD(+) as electron acceptor in vitro, however in vivo preference will depend on their tissue levels. Low activity towards acetaldehyde and 3,4-dihydroxyphenylacetaldehyde. Able to metabolize aromatic aldehydes such as benzaldehyde to their acid form. This is Aldehyde dehydrogenase family 3 member B1 (ALDH3B1) from Homo sapiens (Human).